The primary structure comprises 168 residues: Photosystem I assembly protein Ycf3 (168 aa).

TPR repeat units lie at residues 35 to 68 (AFTY…EIDP), 72 to 105 (SYIL…NPFL), and 120 to 153 (GEQA…TPGN).

Belongs to the Ycf3 family.

It is found in the plastid. The protein localises to the chloroplast thylakoid membrane. In terms of biological role, essential for the assembly of the photosystem I (PSI) complex. May act as a chaperone-like factor to guide the assembly of the PSI subunits. The chain is Photosystem I assembly protein Ycf3 from Coffea arabica (Arabian coffee).